A 313-amino-acid polypeptide reads, in one-letter code: HPr kinase/phosphorylase (313 aa).

Active-site residues include histidine 136 and lysine 157. An ATP-binding site is contributed by 151–158; that stretch reads GDSGIGKS. Serine 158 lines the Mg(2+) pocket. Aspartate 175 serves as the catalytic Proton acceptor; for phosphorylation activity. Proton donor; for dephosphorylation activity. The tract at residues 199–208 is important for the catalytic mechanism of both phosphorylation and dephosphorylation; it reads LEIRGLGIIN. Glutamate 200 lines the Mg(2+) pocket. Arginine 241 is a catalytic residue. The tract at residues 262 to 267 is important for the catalytic mechanism of dephosphorylation; that stretch reads PVRPGR.

Belongs to the HPrK/P family. In terms of assembly, homohexamer. Requires Mg(2+) as cofactor.

The catalysed reaction is [HPr protein]-L-serine + ATP = [HPr protein]-O-phospho-L-serine + ADP + H(+). It catalyses the reaction [HPr protein]-O-phospho-L-serine + phosphate + H(+) = [HPr protein]-L-serine + diphosphate. Catalyzes the ATP- as well as the pyrophosphate-dependent phosphorylation of a specific serine residue in HPr, a phosphocarrier protein of the phosphoenolpyruvate-dependent sugar phosphotransferase system (PTS). HprK/P also catalyzes the pyrophosphate-producing, inorganic phosphate-dependent dephosphorylation (phosphorolysis) of seryl-phosphorylated HPr (P-Ser-HPr). The two antagonistic activities of HprK/P are regulated by several intracellular metabolites, which change their concentration in response to the absence or presence of rapidly metabolisable carbon sources (glucose, fructose, etc.) in the growth medium. Therefore, by controlling the phosphorylation state of HPr, HPrK/P is a sensor enzyme that plays a major role in the regulation of carbon metabolism and sugar transport: it mediates carbon catabolite repression (CCR), and regulates PTS-catalyzed carbohydrate uptake and inducer exclusion. The protein is HPr kinase/phosphorylase of Staphylococcus saprophyticus subsp. saprophyticus (strain ATCC 15305 / DSM 20229 / NCIMB 8711 / NCTC 7292 / S-41).